The primary structure comprises 248 residues: Probable transcriptional regulatory protein MCA1220 (248 aa).

This sequence belongs to the TACO1 family.

It is found in the cytoplasm. This chain is Probable transcriptional regulatory protein MCA1220, found in Methylococcus capsulatus (strain ATCC 33009 / NCIMB 11132 / Bath).